The sequence spans 42 residues: Photosystem I reaction center subunit IX (42 aa).

Residues 8–28 traverse the membrane as a helical segment; sequence YLSTAPVLFTVWLSFTASFII.

The protein belongs to the PsaJ family.

The protein resides in the plastid. It is found in the chloroplast thylakoid membrane. Functionally, may help in the organization of the PsaE and PsaF subunits. This Rhodomonas salina (Cryptomonas salina) protein is Photosystem I reaction center subunit IX.